Consider the following 227-residue polypeptide: MICOS complex subunit Mic19 (227 aa).

Glycine 2 carries the N-myristoyl glycine lipid modification. Serine 29 bears the Phosphoserine mark. The disordered stretch occupies residues 32 to 57 (VIDRMKESSPSGSKSQRYSSVYGASV). Positions 39–50 (SSPSGSKSQRYS) are enriched in polar residues. Tyrosine 49 is modified (phosphotyrosine). Phosphoserine is present on residues serine 50, serine 51, serine 56, and serine 58. The segment at 73–92 (EQAKKESEHQRRLKQARDLE) is disordered. Lysine 142 bears the N6-acetyllysine mark. The region spanning 180–222 (HPVCADLQTKILQCYRQNTQQTLSCSALASQYMHCVNHAKQSM) is the CHCH domain. Short sequence motifs (cx9C motif) lie at residues 183–193 (CADLQTKILQC) and 204–214 (CSALASQYMHC). 2 disulfides stabilise this stretch: cysteine 183/cysteine 214 and cysteine 193/cysteine 204.

This sequence belongs to the MICOS complex subunit Mic19 family. Metazoan Mic19 subfamily. Component of the mitochondrial contact site and cristae organizing system (MICOS) complex, composed of at least MICOS10/MIC10, CHCHD3/MIC19, CHCHD6/MIC25, APOOL/MIC27, IMMT/MIC60, APOO/MIC23/MIC26 and MICOS13/MIC13. This complex was also known under the names MINOS or MitOS complex. The MICOS complex associates with mitochondrial outer membrane proteins SAMM50, MTX1 and MTX2 (together described as components of the mitochondrial outer membrane sorting assembly machinery (SAM) complex) and DNAJC11, mitochondrial inner membrane protein TMEM11 and with HSPA9. The MICOS and SAM complexes together with DNAJC11 are part of a large protein complex spanning both membranes termed the mitochondrial intermembrane space bridging (MIB) complex. Interacts with HSPA1A/HSPA1B and OPA1, preferentially with the soluble OPA1 form.

The protein resides in the mitochondrion inner membrane. It localises to the cytoplasm. The protein localises to the nucleus. Its subcellular location is the mitochondrion. In terms of biological role, component of the MICOS complex, a large protein complex of the mitochondrial inner membrane that plays crucial roles in the maintenance of crista junctions, inner membrane architecture, and formation of contact sites to the outer membrane. Has also been shown to function as a transcription factor which binds to the BAG1 promoter and represses BAG1 transcription. Plays an important role in the maintenance of the MICOS complex stability and the mitochondrial cristae morphology. The polypeptide is MICOS complex subunit Mic19 (Chchd3) (Mus musculus (Mouse)).